Reading from the N-terminus, the 284-residue chain is MALPVNKRVPKILFILFVVAFCVYLVPRVAINFFYYPDDKIYGPDPWSAESVEFTAKDGTRLQGWFIPSSTGPADNAIATIIHAHGNAGNMSAHWPLVSWLPERNFNVFMFDYRGFGKSKGTPSQAGLLDDTQSAINVVRHRSDVNPQRLVLFGQSIGGANILAVIGQGDREGIRAVILDSTFASYATIANQMIPGSGYLLDESYSGENYIASVSPIPLLLIHGKADHVIPWQHSEKLYSLAKEPKRLILIPDGEHIDAFSDRHGDVYREQMVNFILSALNPQN.

The chain crosses the membrane as a helical span at residues 12 to 32 (ILFILFVVAFCVYLVPRVAIN).

It belongs to the serine esterase family.

The protein localises to the membrane. This is an uncharacterized protein from Escherichia coli O157:H7.